A 468-amino-acid chain; its full sequence is Glutamine synthetase (468 aa).

In terms of domain architecture, GS beta-grasp spans 13-97 (NEVKFVDLRF…IRCDILEPAT (85 aa)). One can recognise a GS catalytic domain in the interval 105–468 (PRSIAKRAED…PVEFELYYSV (364 aa)). Mg(2+) contacts are provided by Glu-130 and Glu-132. An ATP-binding site is contributed by Glu-208. The Mg(2+) site is built by Glu-213 and Glu-220. Residues 264–265 (NG) and Gly-265 each bind L-glutamate. Residue His-269 participates in Mg(2+) binding. ATP contacts are provided by residues 271–273 (HQS) and Ser-273. The L-glutamate site is built by Arg-321, Glu-327, and Arg-339. Arg-339, Arg-344, and Lys-352 together coordinate ATP. Glu-357 is a binding site for Mg(2+). Arg-359 is a binding site for L-glutamate. Tyr-397 is modified (O-AMP-tyrosine).

This sequence belongs to the glutamine synthetase family. Oligomer of 12 subunits arranged in the form of two hexameric ring. Mg(2+) is required as a cofactor.

The protein localises to the cytoplasm. It catalyses the reaction L-glutamate + NH4(+) + ATP = L-glutamine + ADP + phosphate + H(+). With respect to regulation, the activity of this enzyme could be controlled by adenylation under conditions of abundant glutamine. Catalyzes the ATP-dependent biosynthesis of glutamine from glutamate and ammonia. The protein is Glutamine synthetase of Vibrio alginolyticus.